Here is a 504-residue protein sequence, read N- to C-terminus: Cytoplasmic dynein 1 light intermediate chain 1 (504 aa).

35–42 (GDPTSGKS) lines the ATP pocket. Composition is skewed to low complexity over residues 167–189 (TTTA…TNKT), 392–425 (NSPS…NTPL), and 437–446 (SSNNPVAASP). Disordered stretches follow at residues 167–195 (TTTA…TTDK), 383–446 (LDND…AASP), and 464–504 (DKTS…QQKK). The span at 464–473 (DKTSSRKDLK) shows a compositional bias: basic and acidic residues. Residues 475–487 (SLASPPTTSVSSN) show a composition bias toward polar residues. The span at 488-504 (AREDAKKELDKLKQQKK) shows a compositional bias: basic and acidic residues.

This sequence belongs to the dynein light intermediate chain family. As to quaternary structure, homodimer. The cytoplasmic dynein 1 complex consists of two catalytic heavy chains (HCs) and a number of non-catalytic subunits presented by intermediate chains (ICs), light intermediate chains (LICs) and light chains (LCs).

The protein localises to the cytoplasm. Its subcellular location is the cytoskeleton. Its function is as follows. Acts as one of several non-catalytic accessory components of the cytoplasmic dynein 1 complex that are thought to be involved in linking dynein to cargos and to adapter proteins that regulate dynein function. Cytoplasmic dynein 1 acts as a motor for the intracellular retrograde motility of vesicles and organelles along microtubules. May play a role in binding dynein to membranous organelles or chromosomes. The sequence is that of Cytoplasmic dynein 1 light intermediate chain 1 (dync1li1) from Dictyostelium discoideum (Social amoeba).